A 393-amino-acid polypeptide reads, in one-letter code: NAD(P)H-quinone oxidoreductase subunit H, chloroplastic (393 aa).

The protein belongs to the complex I 49 kDa subunit family. As to quaternary structure, NDH is composed of at least 16 different subunits, 5 of which are encoded in the nucleus.

The protein localises to the plastid. It is found in the chloroplast thylakoid membrane. It catalyses the reaction a plastoquinone + NADH + (n+1) H(+)(in) = a plastoquinol + NAD(+) + n H(+)(out). The catalysed reaction is a plastoquinone + NADPH + (n+1) H(+)(in) = a plastoquinol + NADP(+) + n H(+)(out). Functionally, NDH shuttles electrons from NAD(P)H:plastoquinone, via FMN and iron-sulfur (Fe-S) centers, to quinones in the photosynthetic chain and possibly in a chloroplast respiratory chain. The immediate electron acceptor for the enzyme in this species is believed to be plastoquinone. Couples the redox reaction to proton translocation, and thus conserves the redox energy in a proton gradient. This is NAD(P)H-quinone oxidoreductase subunit H, chloroplastic from Hordeum vulgare (Barley).